A 180-amino-acid chain; its full sequence is Acireductone dioxygenase (180 aa).

Residues His-99, His-101, Glu-105, and His-145 each contribute to the Fe(2+) site. Residues His-99, His-101, Glu-105, and His-145 each contribute to the Ni(2+) site.

This sequence belongs to the acireductone dioxygenase (ARD) family. As to quaternary structure, monomer. It depends on Fe(2+) as a cofactor. Ni(2+) is required as a cofactor.

It carries out the reaction 1,2-dihydroxy-5-(methylsulfanyl)pent-1-en-3-one + O2 = 3-(methylsulfanyl)propanoate + CO + formate + 2 H(+). It catalyses the reaction 1,2-dihydroxy-5-(methylsulfanyl)pent-1-en-3-one + O2 = 4-methylsulfanyl-2-oxobutanoate + formate + 2 H(+). The protein operates within amino-acid biosynthesis; L-methionine biosynthesis via salvage pathway; L-methionine from S-methyl-5-thio-alpha-D-ribose 1-phosphate: step 5/6. In terms of biological role, catalyzes 2 different reactions between oxygen and the acireductone 1,2-dihydroxy-3-keto-5-methylthiopentene (DHK-MTPene) depending upon the metal bound in the active site. Fe-containing acireductone dioxygenase (Fe-ARD) produces formate and 2-keto-4-methylthiobutyrate (KMTB), the alpha-ketoacid precursor of methionine in the methionine recycle pathway. Ni-containing acireductone dioxygenase (Ni-ARD) produces methylthiopropionate, carbon monoxide and formate, and does not lie on the methionine recycle pathway. This is Acireductone dioxygenase from Geobacillus thermodenitrificans (strain NG80-2).